A 457-amino-acid chain; its full sequence is MNCCICQFSVRVPKDIHTDTVGHPPVLISELVLQCTRGTNYVLTEESSTICKKCCEKLARYHKSIQIARKLRGEILELIHSPYMSKDHKQTSYKEDDLDRETTISKFDGNIEEAQQQDEEEQELESVGTTVTLVGPAGIVEEVAEEEHTFIIKQSEEEDEFHSVDLELDIDNEIIINEEEAHEVEEVAHEIEEVAHEIEEEDLLPHDKQEAQEEDFFKEDTMSDFDEHLDGAIEYIISDGEDQEQDNESSGEYTVNIQCPSCPEKFSSRRAYNVHTKREHFPGYVCDQCGKTLQSYSGFIGHLQNHEPVKQFACPVCPERFSRKFRLKHHMAWHSGETPYQCDVCSKRFVHKVALYKHKMIHDSETKRLECQVCGFKTRTKAHLERHMRSHTGDKPFACPVCNKRFSQMYNMKAHLREHESPGTNRHRRFHCSKCTHTFINEQNYDAHVQRDDCTPV.

The 82-residue stretch at 3-84 folds into the ZAD domain; it reads CCICQFSVRV…ILELIHSPYM (82 aa). C2H2-type zinc fingers lie at residues 257–280, 284–306, 312–334, 340–362, 369–391, and 397–419; these read IQCPSCPEKFSSRRAYNVHTKREH, YVCDQCGKTLQSYSGFIGHLQNH, FACPVCPERFSRKFRLKHHMAWH, YQCDVCSKRFVHKVALYKHKMIH, LECQVCGFKTRTKAHLERHMRSH, and FACPVCNKRFSQMYNMKAHLREH. The segment at 430 to 448 adopts a C2H2-type 7; degenerate zinc-finger fold; the sequence is FHCSKCTHTFINEQNYDAH.

As to quaternary structure, interacts (via region between the ZAD domain and the first zinc finger domain) with Cp190 (via centrosomal targeting M domain); the interaction is direct. Interacts with pita.

The protein resides in the nucleus. It is found in the chromosome. Functionally, insulator DNA-binding protein. Recruits Cp190 and cooperatively binds to chromatin promoter regions to exert transcriptional regulator and chromatin insulator functions. Chromatin insulators are regulatory elements that establish independent domains of transcriptional activity within eukaryotic genomes. Insulators are proposed to structure the chromatin fiber into independent domains of differing transcriptional potential by promoting the formation of distinct chromatin loops to form topologically associating domains (TADs). Chromatin binding sites often cluster with those of other insulator DNA-binding proteins such as pita, CTCF and BEAF-32, but not Su(Hw). The chain is Zinc finger protein ZIPIC from Drosophila melanogaster (Fruit fly).